A 332-amino-acid chain; its full sequence is MAYVKLSEKALKHNLETVSKKAGGSDKIAAVLKDNAYGHGIEGFAKKISRLGIKKAVVRTYEEALKIADFFPYILILSDTPRHDSFHYAINDLDTLQVLEPGTKVHLKIDTGMHRNGIALEEIEKAFELLQKNRAHLTGVFTHFRSADELSSELFWQNEQWQTVKQHVIELIKKYNLQKPLFHAANSAALFRLGCEDDFARIGIALYGYTELDDLYEPPALEPVASLWAQKIASRELKKGSRVGYGGVFEAREDMIISTYDAGYADGIFRFQKEIEDGKILGRVSMDSILLEGEKKEICIFSDAKKMARKLGTISYELLVKMPAHLSRTWID.

The active-site Proton acceptor; specific for D-alanine is the K33. Residue K33 is modified to N6-(pyridoxal phosphate)lysine. R115 serves as a coordination point for substrate. The active-site Proton acceptor; specific for L-alanine is Y245. M286 lines the substrate pocket.

It belongs to the alanine racemase family. Pyridoxal 5'-phosphate is required as a cofactor.

The enzyme catalyses L-alanine = D-alanine. It participates in amino-acid biosynthesis; D-alanine biosynthesis; D-alanine from L-alanine: step 1/1. In terms of biological role, catalyzes the interconversion of L-alanine and D-alanine. May also act on other amino acids. The chain is Alanine racemase (alr) from Nitratiruptor sp. (strain SB155-2).